We begin with the raw amino-acid sequence, 277 residues long: Soluble NSF attachment protein 29 (277 aa).

The segment covering 1 to 11 has biased composition (basic and acidic residues); the sequence is MSRNPFDDDYR. Disordered stretches follow at residues 1–30, 49–73, and 117–170; these read MSRNPFDDDYRPSAASSTMPVKSYTTMGHY, ESLDSTERSRRHLENSEKIGTSTAQ, and KFTK…ESSR. The span at 14-28 shows a compositional bias: polar residues; sequence AASSTMPVKSYTTMG. The t-SNARE coiled-coil homology 1 domain occupies 44 to 106; it reads EKTLQESLDS…QMTQRNLNSL (63 aa). The span at 49–65 shows a compositional bias: basic and acidic residues; the sequence is ESLDSTERSRRHLENSE. Polar residues predominate over residues 134-170; sequence SKSASRLSETATNLSSGGGSATFSGPSGQRTLTESSR. The 63-residue stretch at 179 to 241 folds into the t-SNARE coiled-coil homology 2 domain; it reads EAMDNQIDEN…RDQDKQMQKI (63 aa).

The protein belongs to the SNAP-25 family.

It localises to the synapse. The protein resides in the synaptosome. SNAREs, soluble N-ethylmaleimide-sensitive factor-attachment protein receptors, are essential proteins for fusion of cellular membranes. SNAREs localized on opposing membranes assemble to form a trans-SNARE complex, an extended, parallel four alpha-helical bundle that drives membrane fusion. Plays a role in the processing and secretion of the aspartic protease hrg-7 from the intestine. In Caenorhabditis elegans, this protein is Soluble NSF attachment protein 29.